A 114-amino-acid polypeptide reads, in one-letter code: Iron-sulfur cluster insertion protein ErpA (114 aa).

Iron-sulfur cluster is bound by residues Cys-42, Cys-106, and Cys-108.

It belongs to the HesB/IscA family. Homodimer. The cofactor is iron-sulfur cluster.

In terms of biological role, required for insertion of 4Fe-4S clusters for at least IspG. The sequence is that of Iron-sulfur cluster insertion protein ErpA from Cronobacter sakazakii (strain ATCC BAA-894) (Enterobacter sakazakii).